A 170-amino-acid chain; its full sequence is UPF0316 protein CLJ_B0679 (170 aa).

A run of 2 helical transmembrane segments spans residues 1 to 21 and 36 to 56; these read MLSYYAFIFFAKIMEVALMTI and IIGFIEVTIWLYVTSSVLSGI.

The protein belongs to the UPF0316 family.

It is found in the cell membrane. The chain is UPF0316 protein CLJ_B0679 from Clostridium botulinum (strain 657 / Type Ba4).